A 292-amino-acid chain; its full sequence is 4-hydroxy-tetrahydrodipicolinate synthase (292 aa).

A pyruvate-binding site is contributed by Thr45. Tyr133 functions as the Proton donor/acceptor in the catalytic mechanism. Lys161 serves as the catalytic Schiff-base intermediate with substrate. Ile203 is a pyruvate binding site.

It belongs to the DapA family. Homotetramer; dimer of dimers.

The protein resides in the cytoplasm. The catalysed reaction is L-aspartate 4-semialdehyde + pyruvate = (2S,4S)-4-hydroxy-2,3,4,5-tetrahydrodipicolinate + H2O + H(+). Its pathway is amino-acid biosynthesis; L-lysine biosynthesis via DAP pathway; (S)-tetrahydrodipicolinate from L-aspartate: step 3/4. Functionally, catalyzes the condensation of (S)-aspartate-beta-semialdehyde [(S)-ASA] and pyruvate to 4-hydroxy-tetrahydrodipicolinate (HTPA). In Shigella flexneri, this protein is 4-hydroxy-tetrahydrodipicolinate synthase.